The chain runs to 665 residues: Methionine--tRNA ligase (665 aa).

A 'HIGH' region motif is present at residues 16-26 (YYPSGKAHIGH). Residues 311–315 (KMSKS) carry the 'KMSKS' region motif. Lys-314 provides a ligand contact to ATP. Positions 564 to 665 (DFDKIDLRVA…SALPNGAKVK (102 aa)) constitute a tRNA-binding domain.

The protein belongs to the class-I aminoacyl-tRNA synthetase family. MetG type 2B subfamily. In terms of assembly, homodimer.

It is found in the cytoplasm. It carries out the reaction tRNA(Met) + L-methionine + ATP = L-methionyl-tRNA(Met) + AMP + diphosphate. Is required not only for elongation of protein synthesis but also for the initiation of all mRNA translation through initiator tRNA(fMet) aminoacylation. The sequence is that of Methionine--tRNA ligase from Listeria monocytogenes serotype 4b (strain F2365).